Consider the following 209-residue polypeptide: Small ribosomal subunit protein uS4 (209 aa).

One can recognise an S4 RNA-binding domain in the interval 98–166 (RRLDNVVYRL…IKQAIELNKG (69 aa)).

Belongs to the universal ribosomal protein uS4 family. As to quaternary structure, part of the 30S ribosomal subunit. Contacts protein S5. The interaction surface between S4 and S5 is involved in control of translational fidelity.

Functionally, one of the primary rRNA binding proteins, it binds directly to 16S rRNA where it nucleates assembly of the body of the 30S subunit. In terms of biological role, with S5 and S12 plays an important role in translational accuracy. The polypeptide is Small ribosomal subunit protein uS4 (Fervidobacterium nodosum (strain ATCC 35602 / DSM 5306 / Rt17-B1)).